Here is a 442-residue protein sequence, read N- to C-terminus: Syndecan-3 (442 aa).

2 disordered regions span residues 1 to 25 (MKPG…APGA) and 47 to 80 (RWRN…YSGS). The signal sequence occupies residues 1-44 (MKPGPPRRGTAQGQRVDTATHAPGARGLLLPPLLLLLLAGRAAG). At 45–387 (AQRWRNENFE…SILERKEVLV (343 aa)) the chain is on the extracellular side. A compositionally biased stretch (basic and acidic residues) spans 48–58 (WRNENFERPVD). The segment covering 61-75 (GSGDDDSFPDDELDD) has biased composition (acidic residues). O-linked (Xyl...) (glycosaminoglycan) serine glycosylation is found at serine 78, serine 80, serine 82, and serine 89. Residue threonine 107 is glycosylated (O-linked (GalNAc) threonine; by GALNT13). 3 disordered regions span residues 152–199 (ESSQ…PATA), 253–293 (ATSR…AQTP), and 305–327 (EPEV…TTQP). Low complexity-rich tracts occupy residues 157–199 (ATTI…PATA) and 276–287 (TLPLGTTAPGPT). O-linked (GalNAc) serine; by GALNT13 glycosylation is present at serine 161. O-linked (GalNAc) threonine; by GALNT13 glycosylation is found at threonine 162, threonine 163, threonine 170, and threonine 172. Residues serine 315 and serine 367 are each glycosylated (O-linked (Xyl...) (glycosaminoglycan) serine). Residues 388–408 (AVIVGGVVGALFAAFLVTLLI) traverse the membrane as a helical segment. Phosphotyrosine occurs at positions 409, 419, 431, and 441. Over 409–442 (YRMKKKDEGSYTLEEPKQASVTYQKPDKQEEFYA) the chain is Cytoplasmic. The disordered stretch occupies residues 419–442 (YTLEEPKQASVTYQKPDKQEEFYA). Basic and acidic residues predominate over residues 433–442 (KPDKQEEFYA).

It belongs to the syndecan proteoglycan family. Interacts with TIAM1. Interacts with PTN (via heparan sulfate chains); this interaction mediates the neurite outgrowth-promoting signal from PTN to the cytoskeleton of growing neurites; this interaction mediates osteoblast recruitment. Interacts with MDK; this interaction induces SDC3 clustering; this interaction induces neuronal cell adhesion and neurite outgrowth. In terms of processing, O-glycosylated within the Thr/Ser-rich region which could interact with lectin domains on other molecules.

The protein resides in the cell membrane. Its function is as follows. Cell surface proteoglycan that may bear heparan sulfate. May have a role in the organization of cell shape by affecting the actin cytoskeleton, possibly by transferring signals from the cell surface in a sugar-dependent mechanism. This Mus musculus (Mouse) protein is Syndecan-3 (Sdc3).